Consider the following 180-residue polypeptide: Large ribosomal subunit protein uL16 (180 aa).

This sequence belongs to the universal ribosomal protein uL16 family.

This chain is Large ribosomal subunit protein uL16, found in Pyrobaculum aerophilum (strain ATCC 51768 / DSM 7523 / JCM 9630 / CIP 104966 / NBRC 100827 / IM2).